Reading from the N-terminus, the 353-residue chain is MSKPPDLLLRLLRGAPRQRVCTLFIIGFKFTFFVSIMIYWHVVGEPKEKGQLYNLPAEIPCPTLTPPTPPSHGPTPGNIFFLETSDRTNPNFLFMCSVESAARTHPESHVLVLMKGLPGGNASLPRHLGISLLSCFPNVQMLPLDLRELFRDTPLADWYAAVQGRWEPYLLPVLSDASRIALMWKFGGIYLDTDFIVLKNLRNLTNVLGTQSRYVLNGAFLAFERRHEFMALCMRDFVDHYNGWIWGHQGPQLLTRVFKKWCSIRSLAESRACRGVTTLPPEAFYPIPWQDWKKYFEDINPEELPRLLSATYAVHVWNKKSQGTRFEATSRALLAQLHARYCPTTHEAMKMYL.

The Cytoplasmic segment spans residues 1–22 (MSKPPDLLLRLLRGAPRQRVCT). Residues 23–43 (LFIIGFKFTFFVSIMIYWHVV) form a helical; Signal-anchor for type II membrane protein membrane-spanning segment. Over 44–353 (GEPKEKGQLY…TTHEAMKMYL (310 aa)) the chain is Lumenal. N-linked (GlcNAc...) asparagine glycosylation occurs at Asn-121. The DXD motif motif lies at 192 to 194 (DTD). Asn-203 carries an N-linked (GlcNAc...) asparagine glycan.

This sequence belongs to the glycosyltransferase 32 family. In terms of tissue distribution, ubiquitous. Highly expressed in kidney, heart, spleen, liver, testis and placenta.

It localises to the golgi apparatus membrane. The catalysed reaction is a beta-D-Gal-(1-&gt;4)-beta-D-Glc-(1&lt;-&gt;1)-Cer(d18:1(4E)) + UDP-alpha-D-galactose = a globoside Gb3Cer (d18:1(4E)) + UDP + H(+). It catalyses the reaction a beta-D-Gal-(1&lt;-&gt;1')-ceramide + UDP-alpha-D-galactose = alpha-D-Gal-(1-&gt;4)-beta-D-Gal-(1&lt;-&gt;1')-Cer + UDP + H(+). It functions in the pathway glycolipid biosynthesis. Functionally, catalyzes the transfer of galactose from UDP-alpha-D-galactose to lactosylceramide/beta-D-galactosyl-(1-&gt;4)-beta-D-glucosyl-(1&lt;-&gt;1)-ceramide(d18:1(4E)) to produce globotriaosylceramide/globoside Gb3Cer (d18:1(4E)). Also able to transfer galactose to galactosylceramide/beta-D-Gal-(1&lt;-&gt;1')-Cer. Globoside Gb3Cer is a glycosphingolipid of the globo serie, one of the major types of neutral root structures of glycosphingolipids, that constitute a significant portion of mammalian cell membranes. Globotriaosylceramide/globoside Gb3Cer in blood and tissue cell membranes is the antigen Pk of blood histogroup P. In terms of biological role, (Microbial infection) Globotriaosylceramide is one of the cellular ligands for bacterial verotoxins. The polypeptide is Lactosylceramide 4-alpha-galactosyltransferase (A4GALT) (Homo sapiens (Human)).